We begin with the raw amino-acid sequence, 66 residues long: Large ribosomal subunit protein bL35 (66 aa).

Positions 1–16 (MPKQKTHRASAKRFKR) are enriched in basic residues. The tract at residues 1-20 (MPKQKTHRASAKRFKRTGNG) is disordered.

This sequence belongs to the bacterial ribosomal protein bL35 family.

This is Large ribosomal subunit protein bL35 from Lactococcus lactis subsp. lactis (strain IL1403) (Streptococcus lactis).